Here is a 459-residue protein sequence, read N- to C-terminus: UDP-N-acetylmuramoylalanine--D-glutamate ligase (459 aa).

Glycine 118–threonine 124 serves as a coordination point for ATP.

This sequence belongs to the MurCDEF family.

The protein resides in the cytoplasm. The enzyme catalyses UDP-N-acetyl-alpha-D-muramoyl-L-alanine + D-glutamate + ATP = UDP-N-acetyl-alpha-D-muramoyl-L-alanyl-D-glutamate + ADP + phosphate + H(+). Its pathway is cell wall biogenesis; peptidoglycan biosynthesis. Its function is as follows. Cell wall formation. Catalyzes the addition of glutamate to the nucleotide precursor UDP-N-acetylmuramoyl-L-alanine (UMA). In Desulfosudis oleivorans (strain DSM 6200 / JCM 39069 / Hxd3) (Desulfococcus oleovorans), this protein is UDP-N-acetylmuramoylalanine--D-glutamate ligase.